Here is a 420-residue protein sequence, read N- to C-terminus: Argininosuccinate synthase (420 aa).

An ATP-binding site is contributed by 11-19 (AFSGGLDTT). Y88 contacts L-citrulline. G118 provides a ligand contact to ATP. Positions 120, 124, and 125 each coordinate L-aspartate. N124 contacts L-citrulline. Residues R128, S174, S183, E257, and Y269 each coordinate L-citrulline. The interval 401 to 420 (KGAAVTDGSGDHAASEDTEE) is disordered. A compositionally biased stretch (basic and acidic residues) spans 409–420 (SGDHAASEDTEE).

The protein belongs to the argininosuccinate synthase family. Type 1 subfamily. In terms of assembly, homotetramer.

Its subcellular location is the cytoplasm. It catalyses the reaction L-citrulline + L-aspartate + ATP = 2-(N(omega)-L-arginino)succinate + AMP + diphosphate + H(+). Its pathway is amino-acid biosynthesis; L-arginine biosynthesis; L-arginine from L-ornithine and carbamoyl phosphate: step 2/3. In Haloarcula marismortui (strain ATCC 43049 / DSM 3752 / JCM 8966 / VKM B-1809) (Halobacterium marismortui), this protein is Argininosuccinate synthase.